The chain runs to 384 residues: Prokineticin receptor 2 (384 aa).

Residues 1 to 53 (MAAQNGNASFPANFSIPQEHASSLPFNFSYDDYDLPLDEDEDMTKTQTFFAAK) are Extracellular-facing. 3 N-linked (GlcNAc...) asparagine glycosylation sites follow: N7, N13, and N27. A helical transmembrane segment spans residues 54-74 (IVIGVALVGIMLTCGIGNFVF). The Cytoplasmic segment spans residues 75–89 (ITALTRYKKLRNLTN). The chain crosses the membrane as a helical span at residues 90–110 (LLIANLAISDFLVAIICCPFE). Residues 111–137 (MDYYVVHQLSWEHGHVLCACINYLRTV) are Extracellular-facing. Residues C128 and C208 are joined by a disulfide bond. A helical membrane pass occupies residues 138–158 (SLYVSTNALLAIAIDRYLAIV). The Cytoplasmic portion of the chain corresponds to 159-171 (HPLKPRMNYQTAS). The helical transmembrane segment at 172 to 192 (FLIALVWMVSILISIPSAYFT) threads the bilayer. Residues 193 to 223 (KETVLFIVKNQKKIFCGQVWPVDQQLYYKSY) lie on the Extracellular side of the membrane. The chain crosses the membrane as a helical span at residues 224–244 (FLFVFGIEFLGPVFTMTLCYA). Residues 245 to 273 (RISRELWFKAVPGFQTEQIRKRLRCRRKT) are Cytoplasmic-facing. Residues 274–294 (VLVLMCILTAYVLCWAPFYGF) form a helical membrane-spanning segment. Residues 295 to 313 (TIVRDFFPTVFVKEKHYLT) are Extracellular-facing. The chain crosses the membrane as a helical span at residues 314 to 334 (AFYVVECIAMSNSMINTVCFV). The Cytoplasmic portion of the chain corresponds to 335–384 (TVKNSTMKYFKKMLLLHWRPSHHGSKSSADLDLKTSRLPATEEVDCIRLK).

This sequence belongs to the G-protein coupled receptor 1 family. As to quaternary structure, homodimer.

It is found in the cell membrane. Receptor for prokineticin 2. Exclusively coupled to the G(q) subclass of heteromeric G proteins. Activation leads to mobilization of calcium, stimulation of phosphoinositide turnover and activation of p44/p42 mitogen-activated protein kinase. The chain is Prokineticin receptor 2 (PROKR2) from Bos taurus (Bovine).